The primary structure comprises 94 residues: PTS system galactitol-specific EIIB component (94 aa).

The region spanning Met-1–Gly-94 is the PTS EIIB type-2 domain. Cys-9 (phosphocysteine intermediate; for EIIB activity) is an active-site residue. The residue at position 9 (Cys-9) is a Phosphocysteine; by EIIA.

In terms of assembly, forms a complex with one each of subunit of GatA, GatB and 2 subunits of GatC.

It is found in the cytoplasm. It carries out the reaction galactitol(out) + N(pros)-phospho-L-histidyl-[protein] = galactitol 1-phosphate(in) + L-histidyl-[protein]. Functionally, the phosphoenolpyruvate-dependent sugar phosphotransferase system (PTS), a major carbohydrate active transport system, catalyzes the phosphorylation of incoming sugar substrates concomitant with their translocation across the cell membrane. The enzyme II complex composed of GatA, GatB and GatC is involved in galactitol transport. In Escherichia coli O157:H7, this protein is PTS system galactitol-specific EIIB component (gatB).